Here is a 435-residue protein sequence, read N- to C-terminus: NADH-quinone oxidoreductase subunit D (435 aa).

This sequence belongs to the complex I 49 kDa subunit family. As to quaternary structure, NDH-1 is composed of 14 different subunits. Subunits NuoB, C, D, E, F, and G constitute the peripheral sector of the complex.

It localises to the cell inner membrane. It catalyses the reaction a quinone + NADH + 5 H(+)(in) = a quinol + NAD(+) + 4 H(+)(out). In terms of biological role, NDH-1 shuttles electrons from NADH, via FMN and iron-sulfur (Fe-S) centers, to quinones in the respiratory chain. The immediate electron acceptor for the enzyme in this species is believed to be ubiquinone. Couples the redox reaction to proton translocation (for every two electrons transferred, four hydrogen ions are translocated across the cytoplasmic membrane), and thus conserves the redox energy in a proton gradient. The sequence is that of NADH-quinone oxidoreductase subunit D from Xylella fastidiosa (strain M23).